The chain runs to 281 residues: MIENRPWLTIFSHTMLILGIAVILFPLYVAFVAATLDKQAVYAAPMTLIPGTHLLENIHNIWVNGVGTNSAPFWRMLLNSFVMAFSITLGKITVSMLSAFAIVWFRFPLRNLFFWMIFITLMLPVEVRIFPTVEVIANLKMLDSYAGLTLPLMASATATFLFRQFFMILPDELVEAARIDGASPMRFFCDIVFPLSKTNLAALFVITFIYGWNQYLWPLLIITDVDLGTTVAGIKGMIATGEGTTEWNSVMAAMLLTLIPPVVIVLVMQRAFVRGLVDSEK.

6 helical membrane passes run 16 to 36 (LILG…AATL), 85 to 105 (FSIT…IVWF), 113 to 133 (FFWM…FPTV), 142 to 162 (LDSY…TFLF), 202 to 222 (ALFV…LLII), and 247 to 267 (WNSV…IVLV). The ABC transmembrane type-1 domain occupies 77 to 268 (LLNSFVMAFS…IPPVVIVLVM (192 aa)).

This sequence belongs to the binding-protein-dependent transport system permease family. UgpAE subfamily. As to quaternary structure, the complex is composed of two ATP-binding proteins (UgpC), two transmembrane proteins (UgpA and UgpE) and a solute-binding protein (UgpB).

The protein localises to the cell inner membrane. Functionally, part of the ABC transporter complex UgpBAEC involved in sn-glycerol-3-phosphate (G3P) import. Probably responsible for the translocation of the substrate across the membrane. The sequence is that of sn-glycerol-3-phosphate transport system permease protein UgpE (ugpE) from Shigella dysenteriae serotype 1 (strain Sd197).